Consider the following 441-residue polypeptide: Transcriptional regulatory protein ZraR (441 aa).

The region spanning D7–L121 is the Response regulatory domain. The residue at position 56 (D56) is a 4-aspartylphosphate. Residues M141–V370 form the Sigma-54 factor interaction domain. G172, T173, R329, and R359 together coordinate ATP. The segment at residues K421 to S440 is a DNA-binding region (H-T-H motif).

As to quaternary structure, monomer. In terms of processing, phosphorylated by ZraS.

The protein resides in the cytoplasm. With respect to regulation, activity of the ZraS/ZraR two-component system is repressed by the zinc-bound form of ZraP, which probably interacts with the periplasmic region of ZraS. Its function is as follows. Part of the Zra signaling pathway, an envelope stress response (ESR) system composed of the periplasmic accessory protein ZraP, the histidine kinase ZraS and the transcriptional regulator ZraR. The ZraPSR system contributes to antibiotic resistance and is important for membrane integrity in the presence of membrane-targeting biocides. ZraR is a member of the two-component regulatory system ZraS/ZraR. When activated by ZraS, acts in conjunction with sigma-54 to regulate the expression of zraP in the presence of high Zn(2+) or Pb(2+) concentrations. Also positively autoregulates the expression of the zraSR operon. Binds to a region within the zraP-zraSR intergenic region that is characterized by two inverted repeats separated by a 14 bp spacer. In addition, controls a regulon of genes of diverse functions that may be critical to maintain envelope integrity and cell survival under stressful conditions. The system has no direct role in zinc or copper resistance. This Escherichia coli (strain K12) protein is Transcriptional regulatory protein ZraR.